The chain runs to 445 residues: Phosphoglucosamine mutase (445 aa).

Serine 102 acts as the Phosphoserine intermediate in catalysis. Positions 102, 241, 243, and 245 each coordinate Mg(2+). Serine 102 is modified (phosphoserine).

Belongs to the phosphohexose mutase family. The cofactor is Mg(2+). Post-translationally, activated by phosphorylation.

The enzyme catalyses alpha-D-glucosamine 1-phosphate = D-glucosamine 6-phosphate. Functionally, catalyzes the conversion of glucosamine-6-phosphate to glucosamine-1-phosphate. The sequence is that of Phosphoglucosamine mutase from Shewanella sp. (strain W3-18-1).